A 90-amino-acid chain; its full sequence is UPF0367 protein PMT9312_0127 (90 aa).

This sequence belongs to the UPF0367 family.

In Prochlorococcus marinus (strain MIT 9312), this protein is UPF0367 protein PMT9312_0127.